The sequence spans 291 residues: Small ribosomal subunit biogenesis GTPase RsgA (291 aa).

Residues 63–221 (ENELKRPPVS…IADTPGFSAL (159 aa)) form the CP-type G domain. Residues 112–115 (TKKD) and 164–172 (GQSGVGKST) each bind GTP. Zn(2+) is bound by residues C245, C250, H252, and C258.

This sequence belongs to the TRAFAC class YlqF/YawG GTPase family. RsgA subfamily. In terms of assembly, monomer. Associates with 30S ribosomal subunit, binds 16S rRNA. Zn(2+) serves as cofactor.

It is found in the cytoplasm. One of several proteins that assist in the late maturation steps of the functional core of the 30S ribosomal subunit. Helps release RbfA from mature subunits. May play a role in the assembly of ribosomal proteins into the subunit. Circularly permuted GTPase that catalyzes slow GTP hydrolysis, GTPase activity is stimulated by the 30S ribosomal subunit. The chain is Small ribosomal subunit biogenesis GTPase RsgA from Staphylococcus aureus (strain COL).